Here is a 332-residue protein sequence, read N- to C-terminus: Isopentenyl phosphate kinase (332 aa).

An N-acetylmethionine modification is found at Met-1. 18-22 (KLGGA) is a binding site for ATP. Ala-96 is a binding site for substrate. Gly-97 provides a ligand contact to ATP. Positions 101 and 202 each coordinate substrate. Residues Asp-223, 228–233 (YDRPPS), Gly-279, and Lys-283 contribute to the ATP site.

The protein belongs to the isopentenyl phosphate kinase family.

The protein localises to the cytoplasm. The protein resides in the cytosol. The enzyme catalyses isopentenyl phosphate + ATP = isopentenyl diphosphate + ADP. In terms of biological role, catalyzes the formation of isopentenyl diphosphate (IPP), the universal five-carbon isoprenoid building block of all natural isoprenoids. Acts in parallel with the mevalonate (MVA) pathway and plays an important role in regulating the formation of both MVA and methylerythritol phosphate (MEP) pathway-derived terpenoid compounds by controlling the ratio of isopentenyl phosphate (IP) and dimethylallyl phosphate (DMAP) to isopentenyl diphosphate (IPP) and dimethylallyl diphosphate (DMAPP). Controls the levels of IP and DMAP that are competitive inhibitors of the farnesyl diphosphate synthase. Regulates the production of farnesyl diphosphate-derived terpenoids in the cytosol, and geranyl diphosphate-derived compounds in plastids. The sequence is that of Isopentenyl phosphate kinase from Arabidopsis thaliana (Mouse-ear cress).